The following is a 38-amino-acid chain: Large ribosomal subunit protein bL36A (38 aa).

It belongs to the bacterial ribosomal protein bL36 family.

This Cronobacter sakazakii (strain ATCC BAA-894) (Enterobacter sakazakii) protein is Large ribosomal subunit protein bL36A.